A 242-amino-acid chain; its full sequence is Thymocyte nuclear protein 1 (242 aa).

The disordered stretch occupies residues 1-64; that stretch reads MPWPSRKRDK…KKAKESDSGG (64 aa). The Nuclear localization signal motif lies at 6 to 10; the sequence is RKRDK. Over residues 10 to 27 the composition is skewed to basic and acidic residues; the sequence is KGAVADKKEPDAKIAKTE. Residues 28–37 are compositionally biased toward acidic residues; that stretch reads EETEDKEEEE.

Post-translationally, undergoes proteolytic processing during lymphocyte apoptosis. In terms of processing, phosphorylated. In terms of tissue distribution, expressed at high levels in bursa of fabricus, thymus and spleen. Also found in the liver, intestine, heart and brain.

It is found in the nucleus. Functionally, specifically binds 5-hydroxymethylcytosine (5hmC), suggesting that it acts as a specific reader of 5hmC. The polypeptide is Thymocyte nuclear protein 1 (THYN1) (Gallus gallus (Chicken)).